The primary structure comprises 426 residues: DNA polymerase processivity factor component A20 (426 aa).

It belongs to the poxviruses A20 family. As to quaternary structure, interacts with the DNA polymerase catalytic subunit E9. Interacts with UDG. Component of the Uracil-DNA glycosylase(UDG)-A20-polymerase complex; A20 and UDG form a heterodimeric processivity factor that associates with E9 to form the processive polymerase holoenzyme. Interacts with D5.

Plays an essential role in viral DNA replication by acting as the polymerase processivity factor together with protein D4. May serve as a bridge which links the DNA polymerase E9 and the uracil DNA glycosylase. The polypeptide is DNA polymerase processivity factor component A20 (Vaccinia virus (strain Ankara) (VACV)).